Here is a 365-residue protein sequence, read N- to C-terminus: 3-dehydroquinate synthase (365 aa).

NAD(+) is bound by residues 106–110, 130–131, K142, K151, and 169–172; these read GVIGD, TT, and FFAT. Zn(2+) is bound by residues E184, H247, and H264.

Belongs to the sugar phosphate cyclases superfamily. Dehydroquinate synthase family. NAD(+) serves as cofactor. It depends on Co(2+) as a cofactor. The cofactor is Zn(2+).

The protein resides in the cytoplasm. The enzyme catalyses 7-phospho-2-dehydro-3-deoxy-D-arabino-heptonate = 3-dehydroquinate + phosphate. It functions in the pathway metabolic intermediate biosynthesis; chorismate biosynthesis; chorismate from D-erythrose 4-phosphate and phosphoenolpyruvate: step 2/7. In terms of biological role, catalyzes the conversion of 3-deoxy-D-arabino-heptulosonate 7-phosphate (DAHP) to dehydroquinate (DHQ). This Listeria monocytogenes serovar 1/2a (strain ATCC BAA-679 / EGD-e) protein is 3-dehydroquinate synthase.